The primary structure comprises 315 residues: WD repeat domain-containing protein 83 (315 aa).

7 WD repeats span residues 23–62, 65–104, 107–146, 151–188, 189–228, 233–272, and 275–313; these read CQQG…LLKT, GHGY…VTRK, GHAG…MEPI, ESQD…LQVD, YIGS…MLGE, VNKG…LTLK, and VGKA…AAEN.

It belongs to the WD repeat MORG1 family.

It is found in the cytoplasm. Functionally, molecular scaffold protein for various multimeric protein complexes. Acts as a module in the assembly of a multicomponent scaffold for the ERK pathway, linking ERK responses to specific agonists. Also involved in response to hypoxia by acting as a negative regulator of HIF1A/HIF-1-alpha. This is WD repeat domain-containing protein 83 (wdr83) from Danio rerio (Zebrafish).